Consider the following 546-residue polypeptide: Alpha-isocomene synthase (546 aa).

Mg(2+) contacts are provided by Asp-299, Asp-303, Asp-443, and Glu-451. The DDXXD motif motif lies at 299–303; sequence DDTYD.

It belongs to the terpene synthase family. Tpsa subfamily. It depends on Mg(2+) as a cofactor. Requires Mn(2+) as cofactor. In terms of tissue distribution, highly expressed in roots, lower levels in stems and leaves and detected in disk florets, but not in ray florets.

It carries out the reaction (2E,6E)-farnesyl diphosphate = (-)-alpha-isocomene + diphosphate. Its pathway is secondary metabolite biosynthesis; terpenoid biosynthesis. Functionally, sesquiterpene synthase involved in the biosynthesis of alpha-isocomene as the major product and detectable amounts of beta-caryophyllene, beta-isocomene, silphinene and modeph-2-ene. Produces exclusively the (-)-(E)-beta caryophyllene enantiomer. In Matricaria chamomilla var. recutita (German chamomile), this protein is Alpha-isocomene synthase.